Here is a 438-residue protein sequence, read N- to C-terminus: Enolase (438 aa).

Positions 159 and 168 each coordinate substrate. The active-site Proton donor is E211. Mg(2+) is bound by residues D246, E297, and D322. Substrate contacts are provided by E297 and D322. K347 serves as the catalytic Proton acceptor. Substrate-binding positions include 374–377 and K398; that span reads SHRS.

This sequence belongs to the enolase family. Homodimer. The cofactor is Mg(2+).

It localises to the cytoplasm. The catalysed reaction is (2R)-2-phosphoglycerate = phosphoenolpyruvate + H2O. It functions in the pathway carbohydrate degradation; glycolysis; pyruvate from D-glyceraldehyde 3-phosphate: step 4/5. The chain is Enolase (emp-7) from Neurospora crassa (strain ATCC 24698 / 74-OR23-1A / CBS 708.71 / DSM 1257 / FGSC 987).